We begin with the raw amino-acid sequence, 439 residues long: ATP-dependent protease ATPase subunit HslU (439 aa).

ATP contacts are provided by residues Ile-17, 59–64 (GVGKTE), Asp-251, Glu-317, and Arg-389.

This sequence belongs to the ClpX chaperone family. HslU subfamily. A double ring-shaped homohexamer of HslV is capped on each side by a ring-shaped HslU homohexamer. The assembly of the HslU/HslV complex is dependent on binding of ATP.

It is found in the cytoplasm. Functionally, ATPase subunit of a proteasome-like degradation complex; this subunit has chaperone activity. The binding of ATP and its subsequent hydrolysis by HslU are essential for unfolding of protein substrates subsequently hydrolyzed by HslV. HslU recognizes the N-terminal part of its protein substrates and unfolds these before they are guided to HslV for hydrolysis. The protein is ATP-dependent protease ATPase subunit HslU of Campylobacter jejuni subsp. jejuni serotype O:23/36 (strain 81-176).